Consider the following 354-residue polypeptide: 3-dehydroquinate synthase (354 aa).

Residues 100–104, 124–125, K136, K145, and 163–166 each bind NAD(+); these read GATGD, TT, and FLAT. The Zn(2+) site is built by E178, H242, and H256.

This sequence belongs to the sugar phosphate cyclases superfamily. Dehydroquinate synthase family. It depends on Co(2+) as a cofactor. The cofactor is Zn(2+). NAD(+) serves as cofactor.

It localises to the cytoplasm. It catalyses the reaction 7-phospho-2-dehydro-3-deoxy-D-arabino-heptonate = 3-dehydroquinate + phosphate. It participates in metabolic intermediate biosynthesis; chorismate biosynthesis; chorismate from D-erythrose 4-phosphate and phosphoenolpyruvate: step 2/7. In terms of biological role, catalyzes the conversion of 3-deoxy-D-arabino-heptulosonate 7-phosphate (DAHP) to dehydroquinate (DHQ). The sequence is that of 3-dehydroquinate synthase from Staphylococcus haemolyticus (strain JCSC1435).